The following is a 318-amino-acid chain: Cobalamin biosynthesis protein CobD (318 aa).

A run of 5 helical transmembrane segments spans residues 56-76, 78-98, 153-173, 204-224, and 298-318; these read VLWL…LWLM, EINP…LLAG, VDGV…LAMA, LANW…AWLI, and MMAS…LVGI.

This sequence belongs to the CobD/CbiB family.

The protein resides in the cell membrane. It participates in cofactor biosynthesis; adenosylcobalamin biosynthesis. In terms of biological role, converts cobyric acid to cobinamide by the addition of aminopropanol on the F carboxylic group. This Yersinia enterocolitica serotype O:8 / biotype 1B (strain NCTC 13174 / 8081) protein is Cobalamin biosynthesis protein CobD.